The chain runs to 298 residues: NFU1 iron-sulfur cluster scaffold homolog, mitochondrial (298 aa).

The segment at 194-262 (IKELLDTRIR…IPEVESVEQV (69 aa)) is nifU. Residues C231 and C234 each contribute to the [4Fe-4S] cluster site.

Belongs to the NifU family.

It localises to the mitochondrion. Functionally, molecular scaffold for [Fe-S] cluster assembly of mitochondrial iron-sulfur proteins. This chain is NFU1 iron-sulfur cluster scaffold homolog, mitochondrial, found in Drosophila grimshawi (Hawaiian fruit fly).